A 317-amino-acid chain; its full sequence is Glucose-6-phosphate isomerase, cytosolic 2B (317 aa).

Residue E108 is the Proton donor of the active site. Catalysis depends on residues H139 and K264.

This sequence belongs to the GPI family. Homodimer.

The protein localises to the cytoplasm. The catalysed reaction is alpha-D-glucose 6-phosphate = beta-D-fructose 6-phosphate. Its pathway is carbohydrate degradation; glycolysis; D-glyceraldehyde 3-phosphate and glycerone phosphate from D-glucose: step 2/4. This Clarkia lewisii (Farewell-to-spring) protein is Glucose-6-phosphate isomerase, cytosolic 2B (PGIC2-B).